The chain runs to 146 residues: Ribonuclease H (146 aa).

An RNase H type-1 domain is found at M1–L136. The Mg(2+) site is built by D9, E47, D69, and D128.

The protein belongs to the RNase H family. As to quaternary structure, monomer. Requires Mg(2+) as cofactor.

It localises to the cytoplasm. It carries out the reaction Endonucleolytic cleavage to 5'-phosphomonoester.. Functionally, endonuclease that specifically degrades the RNA of RNA-DNA hybrids. In Campylobacter jejuni subsp. jejuni serotype O:23/36 (strain 81-176), this protein is Ribonuclease H.